The following is a 440-amino-acid chain: Ribosomal protein uS12 methylthiotransferase RimO (440 aa).

An MTTase N-terminal domain is found at 1–117 (MKIFFISLGC…ITEVIDKVLG (117 aa)). The [4Fe-4S] cluster site is built by cysteine 10, cysteine 46, cysteine 80, cysteine 154, cysteine 158, and cysteine 161. The Radical SAM core domain occupies 140–370 (TTGGYYSFLK…MEIQQGIAFE (231 aa)). Residues 373-440 (ESMVGRKLKV…KEYDLIGTAE (68 aa)) form the TRAM domain.

The protein belongs to the methylthiotransferase family. RimO subfamily. The cofactor is [4Fe-4S] cluster.

It is found in the cytoplasm. The catalysed reaction is L-aspartate(89)-[ribosomal protein uS12]-hydrogen + (sulfur carrier)-SH + AH2 + 2 S-adenosyl-L-methionine = 3-methylsulfanyl-L-aspartate(89)-[ribosomal protein uS12]-hydrogen + (sulfur carrier)-H + 5'-deoxyadenosine + L-methionine + A + S-adenosyl-L-homocysteine + 2 H(+). In terms of biological role, catalyzes the methylthiolation of an aspartic acid residue of ribosomal protein uS12. This Lachnoclostridium phytofermentans (strain ATCC 700394 / DSM 18823 / ISDg) (Clostridium phytofermentans) protein is Ribosomal protein uS12 methylthiotransferase RimO.